The primary structure comprises 169 residues: ATP synthase subunit b (169 aa).

Residues Ile3–Asn23 traverse the membrane as a helical segment.

It belongs to the ATPase B chain family. As to quaternary structure, F-type ATPases have 2 components, F(1) - the catalytic core - and F(0) - the membrane proton channel. F(1) has five subunits: alpha(3), beta(3), gamma(1), delta(1), epsilon(1). F(0) has three main subunits: a(1), b(2) and c(10-14). The alpha and beta chains form an alternating ring which encloses part of the gamma chain. F(1) is attached to F(0) by a central stalk formed by the gamma and epsilon chains, while a peripheral stalk is formed by the delta and b chains.

The protein localises to the cell inner membrane. Functionally, f(1)F(0) ATP synthase produces ATP from ADP in the presence of a proton or sodium gradient. F-type ATPases consist of two structural domains, F(1) containing the extramembraneous catalytic core and F(0) containing the membrane proton channel, linked together by a central stalk and a peripheral stalk. During catalysis, ATP synthesis in the catalytic domain of F(1) is coupled via a rotary mechanism of the central stalk subunits to proton translocation. In terms of biological role, component of the F(0) channel, it forms part of the peripheral stalk, linking F(1) to F(0). This Campylobacter curvus (strain 525.92) protein is ATP synthase subunit b.